A 422-amino-acid chain; its full sequence is GTPase Obg (422 aa).

Residues 1-158 (MFYDRARIFV…RWLDLELKLL (158 aa)) form the Obg domain. The OBG-type G domain occupies 159–329 (ADVGLVGFPN…LVYRVSALLE (171 aa)). Residues 165 to 172 (GFPNAGKS), 190 to 194 (FTTIT), 212 to 215 (DIPG), 282 to 285 (NKMD), and 310 to 312 (SAV) each bind GTP. Positions 172 and 192 each coordinate Mg(2+). The region spanning 337–422 (VPEALERPVI…IGDYEFEYVE (86 aa)) is the OCT domain.

This sequence belongs to the TRAFAC class OBG-HflX-like GTPase superfamily. OBG GTPase family. Monomer. Requires Mg(2+) as cofactor.

The protein localises to the cytoplasm. An essential GTPase which binds GTP, GDP and possibly (p)ppGpp with moderate affinity, with high nucleotide exchange rates and a fairly low GTP hydrolysis rate. Plays a role in control of the cell cycle, stress response, ribosome biogenesis and in those bacteria that undergo differentiation, in morphogenesis control. The polypeptide is GTPase Obg (Pelotomaculum thermopropionicum (strain DSM 13744 / JCM 10971 / SI)).